Reading from the N-terminus, the 246-residue chain is Orotidine 5'-phosphate decarboxylase (246 aa).

Residues aspartate 22, lysine 44, 71-80 (DLKYHDIPHT), threonine 130, arginine 191, glutamine 201, glycine 221, and arginine 222 contribute to the substrate site. Lysine 73 (proton donor) is an active-site residue.

This sequence belongs to the OMP decarboxylase family. Type 1 subfamily. Homodimer.

The catalysed reaction is orotidine 5'-phosphate + H(+) = UMP + CO2. It functions in the pathway pyrimidine metabolism; UMP biosynthesis via de novo pathway; UMP from orotate: step 2/2. In terms of biological role, catalyzes the decarboxylation of orotidine 5'-monophosphate (OMP) to uridine 5'-monophosphate (UMP). In Neisseria gonorrhoeae (strain ATCC 700825 / FA 1090), this protein is Orotidine 5'-phosphate decarboxylase.